Consider the following 418-residue polypeptide: L-rhamnose isomerase (418 aa).

Mn(2+)-binding residues include histidine 262, aspartate 294, and aspartate 296.

The protein belongs to the rhamnose isomerase family. It depends on Mn(2+) as a cofactor.

It localises to the cytoplasm. The enzyme catalyses L-rhamnopyranose = L-rhamnulose. Its pathway is carbohydrate degradation; L-rhamnose degradation; glycerone phosphate from L-rhamnose: step 1/3. Functionally, catalyzes the interconversion of L-rhamnose and L-rhamnulose. The chain is L-rhamnose isomerase from Bacteroides thetaiotaomicron (strain ATCC 29148 / DSM 2079 / JCM 5827 / CCUG 10774 / NCTC 10582 / VPI-5482 / E50).